Reading from the N-terminus, the 119-residue chain is Ribonuclease P protein component (119 aa).

It belongs to the RnpA family. Consists of a catalytic RNA component (M1 or rnpB) and a protein subunit.

The enzyme catalyses Endonucleolytic cleavage of RNA, removing 5'-extranucleotides from tRNA precursor.. RNaseP catalyzes the removal of the 5'-leader sequence from pre-tRNA to produce the mature 5'-terminus. It can also cleave other RNA substrates such as 4.5S RNA. The protein component plays an auxiliary but essential role in vivo by binding to the 5'-leader sequence and broadening the substrate specificity of the ribozyme. This is Ribonuclease P protein component from Escherichia coli O6:H1 (strain CFT073 / ATCC 700928 / UPEC).